The sequence spans 332 residues: GTPase Obg (332 aa).

Residues 1–159 enclose the Obg domain; the sequence is MKFLDQAKIY…RWVWLRLKLI (159 aa). An OBG-type G domain is found at 160 to 328; the sequence is ADAGLVGLPN…VLRETLRMIR (169 aa). Residues 166–173, 191–195, 213–216, 280–283, and 309–311 each bind GTP; these read GLPNAGKS, FTTLH, DIPG, NKMD, and SAA. Positions 173 and 193 each coordinate Mg(2+).

The protein belongs to the TRAFAC class OBG-HflX-like GTPase superfamily. OBG GTPase family. In terms of assembly, monomer. It depends on Mg(2+) as a cofactor.

It is found in the cytoplasm. Its function is as follows. An essential GTPase which binds GTP, GDP and possibly (p)ppGpp with moderate affinity, with high nucleotide exchange rates and a fairly low GTP hydrolysis rate. Plays a role in control of the cell cycle, stress response, ribosome biogenesis and in those bacteria that undergo differentiation, in morphogenesis control. The chain is GTPase Obg from Acidiphilium cryptum (strain JF-5).